Consider the following 256-residue polypeptide: Phosphatidylglycerol--prolipoprotein diacylglyceryl transferase (256 aa).

Transmembrane regions (helical) follow at residues 19 to 39 (VHWY…LGYW), 56 to 76 (LIFY…MLFY), and 91 to 111 (IWEG…AAWL). Arg-139 contributes to the a 1,2-diacyl-sn-glycero-3-phospho-(1'-sn-glycerol) binding site. A helical membrane pass occupies residues 231–251 (FGWLTMGQVLSIPMLLIGIWL).

This sequence belongs to the Lgt family.

It is found in the cell inner membrane. The catalysed reaction is L-cysteinyl-[prolipoprotein] + a 1,2-diacyl-sn-glycero-3-phospho-(1'-sn-glycerol) = an S-1,2-diacyl-sn-glyceryl-L-cysteinyl-[prolipoprotein] + sn-glycerol 1-phosphate + H(+). Its pathway is protein modification; lipoprotein biosynthesis (diacylglyceryl transfer). Functionally, catalyzes the transfer of the diacylglyceryl group from phosphatidylglycerol to the sulfhydryl group of the N-terminal cysteine of a prolipoprotein, the first step in the formation of mature lipoproteins. The sequence is that of Phosphatidylglycerol--prolipoprotein diacylglyceryl transferase from Legionella pneumophila (strain Corby).